The following is a 413-amino-acid chain: Cardiolipin synthase B (413 aa).

PLD phosphodiesterase domains follow at residues 108-135 and 285-312; these read IFRR…SAEH and RRRP…DPLS. Residues His-113, Lys-115, Asp-120, His-290, Lys-292, and Asp-297 contribute to the active site. The tract at residues 388-413 is disordered; the sequence is AQVPPPAQPEMETQDRVDPENSGVKP.

It belongs to the phospholipase D family. Cardiolipin synthase subfamily. ClsB sub-subfamily.

It is found in the cell membrane. It carries out the reaction 2 a 1,2-diacyl-sn-glycero-3-phospho-(1'-sn-glycerol) = a cardiolipin + glycerol. Catalyzes the phosphatidyl group transfer from one phosphatidylglycerol molecule to another to form cardiolipin (CL) (diphosphatidylglycerol) and glycerol. This is Cardiolipin synthase B from Salmonella typhi.